The following is a 316-amino-acid chain: Pantothenate kinase (316 aa).

95 to 102 lines the ATP pocket; sequence GSVAVGKS.

The protein belongs to the prokaryotic pantothenate kinase family.

Its subcellular location is the cytoplasm. The catalysed reaction is (R)-pantothenate + ATP = (R)-4'-phosphopantothenate + ADP + H(+). The protein operates within cofactor biosynthesis; coenzyme A biosynthesis; CoA from (R)-pantothenate: step 1/5. This chain is Pantothenate kinase, found in Shewanella baltica (strain OS195).